Reading from the N-terminus, the 327-residue chain is MRPPGFWTRPPTHPLARLLAPVGRVYGGLTADRMDRPGAEPPYPVLCVGNFTLGGAGKTPTALALVRLLRDLGRTPALLSRGYGGRLAGPLVVDPARHAAAEVGDEPLLLAQAAPTIVARDRPSGARLCAASGADVIVMDDGLQNPSLTKSLSLAVVDGGVGLGNGLPFPAGPLRAPLARQWPHVAGLVLVGEGSPGEAMAAEAESRGLPVHRARLVPEAGSDWAGRRVVAFAGIGRPQKFFETLRSLGAEIVAEWAFPDHHPYRPGDWTALSALAAREGASLVTTEKDAVRLPAEARTAVAVLRVALAFADETRLRQQLAAAFPRA.

52–59 (TLGGAGKT) contributes to the ATP binding site.

It belongs to the LpxK family.

The catalysed reaction is a lipid A disaccharide + ATP = a lipid IVA + ADP + H(+). It participates in glycolipid biosynthesis; lipid IV(A) biosynthesis; lipid IV(A) from (3R)-3-hydroxytetradecanoyl-[acyl-carrier-protein] and UDP-N-acetyl-alpha-D-glucosamine: step 6/6. Its function is as follows. Transfers the gamma-phosphate of ATP to the 4'-position of a tetraacyldisaccharide 1-phosphate intermediate (termed DS-1-P) to form tetraacyldisaccharide 1,4'-bis-phosphate (lipid IVA). This chain is Tetraacyldisaccharide 4'-kinase, found in Methylorubrum extorquens (strain CM4 / NCIMB 13688) (Methylobacterium extorquens).